The primary structure comprises 92 residues: Small ribosomal subunit protein bS20 (92 aa).

Basic residues predominate over residues 1–11 (MANIKSQKKRI). Residues 1–22 (MANIKSQKKRIRQNEKARLRNK) are disordered.

This sequence belongs to the bacterial ribosomal protein bS20 family.

Functionally, binds directly to 16S ribosomal RNA. The sequence is that of Small ribosomal subunit protein bS20 from Thermobifida fusca (strain YX).